Consider the following 451-residue polypeptide: MALNVIKISRVSLVTNSVEPLVLPLTFFDLLWLKLNPIERVTFYKLTESSRDSFFSSILPKLEQSLSLVLSHFLPLSGHLKWNPQDPKPHIVIFPKDTVSLTVVESEADFSYISSKELRLETELRPLVPELQVSSDSASLLSLQITLFPNQGFSIGTTVHHVVMDGKTASKFHKSWAHICKHGTTPQDFDLPTVLDRTVINVPAGLEQKIFQLSSYISEEKDYARTLTLPPAKEIDNDVVRVTLELTEVDIEKLKERAKNESTRSDLHLSTFVVSYAYVLTCMVKSCGGDANRPVRFMYAADFRNRLDPPVPLTYFGNCVLPIDFNGYKATTFLGKDGYVNGVEILSDSVRGLGSRNIESIWEVYEDGTKNMKLDTQNVTVTGSNQFGIYGSDFGWGRPVKTDVMSLYKNNEFSMSARRDEIGGLEIGISLKKCEMNVFLSLFTSDFDIYK.

Residues histidine 161 and aspartate 393 each act as proton acceptor in the active site.

It belongs to the plant acyltransferase family.

The protein is BAHD acyltransferase At3g29680 of Arabidopsis thaliana (Mouse-ear cress).